The primary structure comprises 155 residues: 3-hydroxyacyl-[acyl-carrier-protein] dehydratase FabZ (155 aa).

Residue H57 is part of the active site.

It belongs to the thioester dehydratase family. FabZ subfamily.

The protein localises to the cytoplasm. The catalysed reaction is a (3R)-hydroxyacyl-[ACP] = a (2E)-enoyl-[ACP] + H2O. In terms of biological role, involved in unsaturated fatty acids biosynthesis. Catalyzes the dehydration of short chain beta-hydroxyacyl-ACPs and long chain saturated and unsaturated beta-hydroxyacyl-ACPs. This chain is 3-hydroxyacyl-[acyl-carrier-protein] dehydratase FabZ, found in Cereibacter sphaeroides (strain KD131 / KCTC 12085) (Rhodobacter sphaeroides).